Consider the following 318-residue polypeptide: Leucine-rich repeat domain-containing protein YddK (318 aa).

LRR repeat units lie at residues 109-129 (NFTS…TNYD), 130-151 (RLVK…QGRN), 153-173 (SITH…DRLS), 174-194 (SVTY…ESCE), 195-216 (WLQY…NKNE), 217-237 (LLLL…LFPN), 238-258 (LNTL…YSNF), 260-280 (NVQT…DFLT), and 284-305 (SIKS…NTSD).

The polypeptide is Leucine-rich repeat domain-containing protein YddK (yddK) (Escherichia coli (strain K12)).